The sequence spans 168 residues: Putative F-box protein At1g30945 (168 aa).

Residues 5 to 52 (KTFDSISNDLFLEILLRLSTKSIDRSRCVSKQWASILCSQDFTESEKF) form the F-box domain.

This Arabidopsis thaliana (Mouse-ear cress) protein is Putative F-box protein At1g30945.